We begin with the raw amino-acid sequence, 301 residues long: Cell division protein kinase 2 homolog CRK1 (301 aa).

Positions Tyr-5–Phe-297 constitute a Protein kinase domain. Residues Ile-11–Val-19 and Lys-34 each bind ATP. The Proton acceptor role is filled by Asp-127. Residue Thr-160 is modified to Phosphothreonine; by CAK.

Belongs to the protein kinase superfamily. CMGC Ser/Thr protein kinase family. CDC2/CDKX subfamily. Forms a stable but non-covalent complex with a regulatory subunit and with a cyclin.

It catalyses the reaction [DNA-directed RNA polymerase] + ATP = phospho-[DNA-directed RNA polymerase] + ADP + H(+). With respect to regulation, phosphorylation at Thr-15 or Tyr-16 inactivates the enzyme, while phosphorylation at Thr-160 activates it. May be involved in some stage-specific role in the promastigote cell cycle. The protein is Cell division protein kinase 2 homolog CRK1 (CRK1) of Leishmania mexicana.